Reading from the N-terminus, the 511-residue chain is Maturase K (511 aa).

It belongs to the intron maturase 2 family. MatK subfamily.

The protein resides in the plastid. It localises to the chloroplast. Its function is as follows. Usually encoded in the trnK tRNA gene intron. Probably assists in splicing its own and other chloroplast group II introns. The polypeptide is Maturase K (Hordeum jubatum (Foxtail barley)).